Consider the following 194-residue polypeptide: Protein DROOPING LEAF (194 aa).

The C4-type zinc-finger motif lies at Cys15 to Cys42. The tract at residues Leu83–Glu103 is disordered.

It belongs to the YABBY family.

It localises to the nucleus. Functionally, regulates carpel specification in flower development. Severe or intermediate mutation in DL causes complete or partial homeotic conversion of carpels into stamens without affecting the identities of other floral organs. Interacts antagonistically with class B genes and controls floral meristem determinacy. Regulates midrib formation in leaves probably by inducing cell proliferation in the central region of the leaf. The protein is Protein DROOPING LEAF (DL) of Oryza sativa subsp. japonica (Rice).